The chain runs to 4303 residues: Polycystin-1 (4303 aa).

The N-terminal stretch at 1–23 is a signal peptide; the sequence is MPPAAPARLALALGLGLWLGALA. The LRRNT domain occupies 24-67; that stretch reads GGPGRGCGPCEPPCLCGPAPGAACRVNCSGRGLRTLGPALRIPA. Topologically, residues 24–3074 are extracellular; it reads GGPGRGCGPC…VFPEPTADVN (3051 aa). Asn50 and Asn89 each carry an N-linked (GlcNAc...) asparagine glycan. LRR repeat units follow at residues 68–91 and 92–113; these read DATALDVSHNLLRALDVGLLANLS and ALAELDISNNKISTLEEGIFAN. 2 N-linked (GlcNAc...) asparagine glycosylation sites follow: Asn116 and Asn121. The 54-residue stretch at 125 to 178 folds into the LRRCT domain; it reads NPFECDCGLAWLPRWAEEQQVRVVQPEAATCAGPGSLAGQPLLGIPLLDSGCGE. The 95-residue stretch at 177–271 folds into the WSC domain; that stretch reads GEEYVACLPD…PTLLQHVFPA (95 aa). Asn187 carries an N-linked (GlcNAc...) asparagine glycan. The PKD 1 domain maps to 272 to 359; that stretch reads SPGATLVGPH…VQVEAAPAAL (88 aa). The C-type lectin domain occupies 415-531; that stretch reads GNGHCYRLVV…CSAPHSYVCE (117 aa). 2 cysteine pairs are disulfide-bonded: Cys436/Cys530 and Cys508/Cys522. The interval 616 to 635 is disordered; sequence AGTPENGSEPESRSPDNRTQ. N-linked (GlcNAc...) asparagine glycans are attached at residues Asn621 and Asn632. The region spanning 638 to 671 is the LDL-receptor class A; atypical domain; that stretch reads PACMPGGRWCPGANICLPLDASCHPQACANGCTS. 3 disulfides stabilise this stretch: Cys640–Cys653, Cys647–Cys665, and Cys660–Cys669. One can recognise a PKD 2 domain in the interval 743 to 817; it reads LSANASSWLP…RHNLSCSFDV (75 aa). N-linked (GlcNAc...) asparagine glycans are attached at residues Asn746, Asn810, Asn841, Asn854, Asn890, Asn921, Asn1004, Asn1010, Asn1034, Asn1072, Asn1113, Asn1178, Asn1194, Asn1240, Asn1269, Asn1336, Asn1348, Asn1382, Asn1450, Asn1455, Asn1474, Asn1518, Asn1541, Asn1554, Asn1563, Asn1647, Asn1661, Asn1733, Asn1791, Asn1834, Asn1867, and Asn1880. 15 consecutive PKD domains span residues 855-928, 935-1020, 1023-1129, 1127-1215, 1213-1298, 1294-1383, 1382-1469, 1468-1551, 1550-1635, 1634-1721, 1719-1805, 1807-1890, 1889-1974, 1977-2057, and 2060-2148; these read ATAT…RVTA, LRAT…NRMQ, QVST…LPSV, PSVA…LRGL, RGLS…EVLR, LEVL…VGNV, NVTL…VLVT, VTSI…VRGL, GLVV…IEGL, GLQV…VGWL, GWLM…VSGL, IRAS…IVGL, GLVL…VSGL, PNCC…VLEV, and AVQY…ACRE. 18 N-linked (GlcNAc...) asparagine glycosylation sites follow: Asn1991, Asn2050, Asn2074, Asn2125, Asn2248, Asn2353, Asn2395, Asn2412, Asn2567, Asn2578, Asn2645, Asn2718, Asn2754, Asn2841, Asn2878, Asn2925, Asn2956, and Asn2994. Residues 2146–2833 enclose the REJ domain; it reads CREPEVDVVL…QLIFLVDSNP (688 aa). Residues 2862 to 3063 form the GAIN-B domain; sequence PIERLASERA…SLFVPPSHVR (202 aa). The cysteines at positions 3015 and 3043 are disulfide-linked. The interval 3015-3063 is GPS; sequence CQYFSEEDMVWRTEGLLPLEETSPRQAVCLTRHLTAFGASLFVPPSHVR. The helical transmembrane segment at 3075-3095 threads the bilayer; sequence YIVMLTCAVCLVTYMVMAAIL. Over 3096-3277 the chain is Cytoplasmic; that stretch reads HKLDQLDASR…DRPPRSRFTR (182 aa). The region spanning 3118-3233 is the PLAT domain; sequence FKYEILVKTG…EANGGLVEKE (116 aa). Residues 3278–3298 traverse the membrane as a helical segment; it reads IQRATCCVLLICLFLGANAVW. Residues 3299 to 3323 lie on the Extracellular side of the membrane; it reads YGAVGDSAYSTGHVSRLSPLSVDTV. A helical transmembrane segment spans residues 3324–3344; it reads AVGLVSSVVVYPVYLAILFLF. Topologically, residues 3345–3559 are cytoplasmic; the sequence is RMSRSKVAGS…LPAWCASLAH (215 aa). A helical transmembrane segment spans residues 3560–3580; that stretch reads GLSLLLVAVAVAVSGWVGASF. The Extracellular portion of the chain corresponds to 3581-3582; that stretch reads PP. Residues 3583-3603 form a helical membrane-spanning segment; that stretch reads GVSVAWLLSSSASFLASFLGW. Over 3604–3665 the chain is Cytoplasmic; it reads EPLKVLLEAL…LAKEEARKVK (62 aa). A helical transmembrane segment spans residues 3666-3686; sequence RLHGMLRSLLVYMLFLLVTLL. The Extracellular segment spans residues 3687–3901; it reads ASYGDASCHG…RLSAGLSLPL (215 aa). Asn3738, Asn3790, and Asn3845 each carry an N-linked (GlcNAc...) asparagine glycan. Residues 3902–3922 form a helical membrane-spanning segment; sequence LTSVCLLLFAVHFAVAEARTW. At 3923–3935 the chain is on the cytoplasmic side; sequence HREGRWRVLRLGA. A helical transmembrane segment spans residues 3936–3956; sequence WARWLLVALTAATALVRLAQL. Residues 3957-3984 lie on the Extracellular side of the membrane; that stretch reads GAADRQWTRFVRGRPRRFTSFDQVAQLS. A helical transmembrane segment spans residues 3985–4005; that stretch reads SAARGLAASLLFLLLVKAAQQ. At 4006–4027 the chain is on the cytoplasmic side; the sequence is LRFVRQWSVFGKTLCRALPELL. A helical membrane pass occupies residues 4028 to 4048; the sequence is GVTLGLVVLGVAYAQLAILLV. Over 4049–4090 the chain is Extracellular; sequence SSCVDSLWSVAQALLVLCPGTGLSTLCPAESWHLSPLLCVGL. Residues 4091–4110 form a helical membrane-spanning segment; that stretch reads WALRLWGALRLGAVILRWRY. The Cytoplasmic portion of the chain corresponds to 4111–4303; the sequence is HALRGELYRP…AKNKVHPSST (193 aa). 2 disordered regions span residues 4160–4196 and 4243–4303; these read PLPSRSSRGSKVSPDVPPPSAGSDASHPSTSSSQLDG and LHSL…PSST. Ser4166 carries the post-translational modification Phosphoserine; by PRKX; in vitro. Residues 4185-4195 are compositionally biased toward polar residues; the sequence is SHPSTSSSQLD. Residues 4220-4251 are a coiled coil; the sequence is EALLTQFDRLNQATEDVYQLEQQLHSLQGRRS. Residues 4253–4269 show a composition bias toward low complexity; that stretch reads RAPAGSSRGPSPGLRPA. Basic residues predominate over residues 4292–4303; that stretch reads LRAKNKVHPSST.

This sequence belongs to the polycystin family. Component of the heterotetrameric polycystin channel complex with PKD2; the tetramer contains one PKD1 chain and three PKD2 chains. Interacts with PKD2; the interaction is required for ciliary localization. Interacts with PKD2L1. Interacts with PRKX; involved in differentiation and controlled morphogenesis of the kidney. Interacts (via extracellular domain) with WNT3A, WNT4, WNT5A and WNT9B. Interacts with DVL1 and DVL2. Interacts with NPHP1 (via SH3 domain). Interacts with BBS1, BBS4, BBS5 and TTC8. Interacts with RGS7. Interacts (via the PKD repeats in the N-terminal extracellular region) with EPCIP; the interaction is not dependent on N-glycosylation of either protein. Post-translationally, N-glycosylated. In terms of processing, after synthesis, undergoes cleavage between Leu-3048 and Thr-3049 in the GPS region of the GAIN-B domain. Cleavage at the GPS region occurs through a cis-autoproteolytic mechanism involving an ester-intermediate via N-O acyl rearrangement. This process takes place in the early secretory pathway, depends on initial N-glycosylation, and requires the REJ domain. There is evidence that cleavage at GPS region is incomplete. Uncleaved and cleaved products may have different functions in vivo.

It is found in the cell membrane. The protein resides in the cell projection. Its subcellular location is the cilium. The protein localises to the endoplasmic reticulum. It localises to the golgi apparatus. It is found in the vesicle. The protein resides in the secreted. Its subcellular location is the extracellular exosome. In terms of biological role, component of a heteromeric calcium-permeable ion channel formed by PKD1 and PKD2 that is activated by interaction between PKD1 and a Wnt family member, such as WNT3A and WNT9B. Both PKD1 and PKD2 are required for channel activity. Involved in renal tubulogenesis. Involved in fluid-flow mechanosensation by the primary cilium in renal epithelium. Acts as a regulator of cilium length, together with PKD2. The dynamic control of cilium length is essential in the regulation of mechanotransductive signaling. The cilium length response creates a negative feedback loop whereby fluid shear-mediated deflection of the primary cilium, which decreases intracellular cAMP, leads to cilium shortening and thus decreases flow-induced signaling. May be an ion-channel regulator. Involved in adhesive protein-protein and protein-carbohydrate interactions. Likely to be involved with polycystin-1-interacting protein 1 in the detection, sequestration and exocytosis of senescent mitochondria. The sequence is that of Polycystin-1 from Homo sapiens (Human).